The primary structure comprises 45 residues: Psychimicin (45 aa).

Disulfide bonds link cysteine 10/cysteine 24, cysteine 14/cysteine 36, and cysteine 25/cysteine 42.

Monomer. In terms of tissue distribution, hemolymph.

Its subcellular location is the secreted. In terms of biological role, has antimicrobial activity. Is particularly active against fungi, and to a lesser extent against Gram-positive and Gram-negative bacteria. The polypeptide is Psychimicin (Oiketicus kirbyi (Bagworm moth)).